Here is a 226-residue protein sequence, read N- to C-terminus: ATP synthase F(0) complex subunit a (226 aa).

6 helical membrane-spanning segments follow: residues 6–26 (FASF…IIMF), 68–88 (WSLM…LGLL), 97–117 (QLSM…FTGF), 136–156 (LLIP…PVAL), 164–184 (ITAG…LLNI), and 189–209 (AFIT…VALI).

The protein belongs to the ATPase A chain family. As to quaternary structure, component of the ATP synthase complex composed at least of ATP5F1A/subunit alpha, ATP5F1B/subunit beta, ATP5MC1/subunit c (homooctomer), MT-ATP6/subunit a, MT-ATP8/subunit 8, ATP5ME/subunit e, ATP5MF/subunit f, ATP5MG/subunit g, ATP5MK/subunit k, ATP5MJ/subunit j, ATP5F1C/subunit gamma, ATP5F1D/subunit delta, ATP5F1E/subunit epsilon, ATP5PF/subunit F6, ATP5PB/subunit b, ATP5PD/subunit d, ATP5PO/subunit OSCP. ATP synthase complex consists of a soluble F(1) head domain (subunits alpha(3) and beta(3)) - the catalytic core - and a membrane F(0) domain - the membrane proton channel (subunits c, a, 8, e, f, g, k and j). These two domains are linked by a central stalk (subunits gamma, delta, and epsilon) rotating inside the F1 region and a stationary peripheral stalk (subunits F6, b, d, and OSCP). Interacts with DNAJC30; interaction is direct.

It localises to the mitochondrion inner membrane. The catalysed reaction is H(+)(in) = H(+)(out). In terms of biological role, subunit a, of the mitochondrial membrane ATP synthase complex (F(1)F(0) ATP synthase or Complex V) that produces ATP from ADP in the presence of a proton gradient across the membrane which is generated by electron transport complexes of the respiratory chain. ATP synthase complex consist of a soluble F(1) head domain - the catalytic core - and a membrane F(1) domain - the membrane proton channel. These two domains are linked by a central stalk rotating inside the F(1) region and a stationary peripheral stalk. During catalysis, ATP synthesis in the catalytic domain of F(1) is coupled via a rotary mechanism of the central stalk subunits to proton translocation. With the subunit c (ATP5MC1), forms the proton-conducting channel in the F(0) domain, that contains two crucial half-channels (inlet and outlet) that facilitate proton movement from the mitochondrial intermembrane space (IMS) into the matrix. Protons are taken up via the inlet half-channel and released through the outlet half-channel, following a Grotthuss mechanism. In Sus scrofa (Pig), this protein is ATP synthase F(0) complex subunit a.